The following is a 445-amino-acid chain: 6-phosphogluconate dehydrogenase, decarboxylating (445 aa).

NADP(+) is bound by residues 1 to 4 (AVMG), 22 to 24 (NRS), 63 to 65 (VKA), and asparagine 91. Residues asparagine 91 and 117-119 (SGG) contribute to the substrate site. Lysine 172 (proton acceptor) is an active-site residue. 175–176 (HN) lines the substrate pocket. The active-site Proton donor is the glutamate 179. Substrate-binding residues include tyrosine 180, lysine 249, arginine 276, arginine 434, and histidine 440.

Belongs to the 6-phosphogluconate dehydrogenase family. In terms of assembly, homodimer.

The enzyme catalyses 6-phospho-D-gluconate + NADP(+) = D-ribulose 5-phosphate + CO2 + NADPH. It functions in the pathway carbohydrate degradation; pentose phosphate pathway; D-ribulose 5-phosphate from D-glucose 6-phosphate (oxidative stage): step 3/3. Functionally, catalyzes the oxidative decarboxylation of 6-phosphogluconate to ribulose 5-phosphate and CO(2), with concomitant reduction of NADP to NADPH. The sequence is that of 6-phosphogluconate dehydrogenase, decarboxylating (gnd) from Shigella boydii.